Here is a 315-residue protein sequence, read N- to C-terminus: Solute carrier family 25 member 32 (315 aa).

3 Solcar repeats span residues 20 to 109 (HVRY…IKSY), 118 to 209 (LEAT…LKLK), and 222 to 306 (LSTV…VSHF). A run of 6 helical transmembrane segments spans residues 26-43 (LIAGVSGGVLSNLALHPL), 89-106 (IWGAGLSWGLYFFFYNAI), 123-143 (YLVSAAEAGAMTLCITNPLWV), 186-203 (FVPGLFGTSHGALQFMAY), 227-243 (YISVAALSKIFAVAATY), and 281-300 (GIAPNLIRVTPACCITFVVY).

The protein belongs to the mitochondrial carrier (TC 2.A.29) family. As to expression, ubiquitous.

It is found in the mitochondrion inner membrane. It carries out the reaction FAD(in) = FAD(out). In terms of biological role, facilitates flavin adenine dinucleotide (FAD) translocation across the mitochondrial inner membrane into the mitochondrial matrix where it acts as a redox cofactor to assist flavoenzyme activities in fundamental metabolic processes including fatty acid beta-oxidation, amino acid and choline metabolism as well as mitochondrial electron transportation. In particular, provides FAD to DLD dehydrogenase of the glycine cleavage system, part of mitochondrial one-carbon metabolic pathway involved in neural tube closure in early embryogenesis. In Homo sapiens (Human), this protein is Solute carrier family 25 member 32.